The sequence spans 201 residues: Dephospho-CoA kinase (201 aa).

A DPCK domain is found at 3–201 (VIGLTGGIAS…WKERIEKNPR (199 aa)). 11–16 (ASGKST) serves as a coordination point for ATP.

This sequence belongs to the CoaE family.

The protein resides in the cytoplasm. The enzyme catalyses 3'-dephospho-CoA + ATP = ADP + CoA + H(+). Its pathway is cofactor biosynthesis; coenzyme A biosynthesis; CoA from (R)-pantothenate: step 5/5. Catalyzes the phosphorylation of the 3'-hydroxyl group of dephosphocoenzyme A to form coenzyme A. The chain is Dephospho-CoA kinase from Geobacter metallireducens (strain ATCC 53774 / DSM 7210 / GS-15).